The sequence spans 335 residues: Biotin synthase (335 aa).

The Radical SAM core domain maps to 51–278; sequence NTVQLSSLLS…LAKVRLSAGR (228 aa). Residues Cys-66, Cys-70, and Cys-73 each coordinate [4Fe-4S] cluster. [2Fe-2S] cluster-binding residues include Cys-110, Cys-141, Cys-201, and Arg-273.

The protein belongs to the radical SAM superfamily. Biotin synthase family. As to quaternary structure, homodimer. [4Fe-4S] cluster serves as cofactor. Requires [2Fe-2S] cluster as cofactor.

The catalysed reaction is (4R,5S)-dethiobiotin + (sulfur carrier)-SH + 2 reduced [2Fe-2S]-[ferredoxin] + 2 S-adenosyl-L-methionine = (sulfur carrier)-H + biotin + 2 5'-deoxyadenosine + 2 L-methionine + 2 oxidized [2Fe-2S]-[ferredoxin]. It participates in cofactor biosynthesis; biotin biosynthesis; biotin from 7,8-diaminononanoate: step 2/2. Catalyzes the conversion of dethiobiotin (DTB) to biotin by the insertion of a sulfur atom into dethiobiotin via a radical-based mechanism. This Bordetella pertussis (strain Tohama I / ATCC BAA-589 / NCTC 13251) protein is Biotin synthase.